The primary structure comprises 1460 residues: Cilia- and flagella-associated protein 43 (1460 aa).

WD repeat units follow at residues 46–87 (EGRY…HLQC), 91–132 (VATV…RLVK), 184–221 (SKGH…MKNY), 303–342 (RRRS…AGHT), 428–468 (IFAC…DSAS), 529–569 (MRDH…MKLP), 589–628 (FGRG…IHYS), 911–951 (EIDP…VTEV), and 1129–1170 (NRRF…CRAV). Coiled-coil stretches lie at residues 1170-1214 (VVEA…AEEA) and 1399-1446 (LGEH…LREA).

It belongs to the CFAP43 family.

The protein localises to the cell projection. Its subcellular location is the cilium. It localises to the flagellum. It is found in the cytoplasm. The protein resides in the cytoskeleton. The protein localises to the flagellum axoneme. Its function is as follows. Flagellar protein involved in flagellum axoneme organization and function. The polypeptide is Cilia- and flagella-associated protein 43 (Trypanosoma brucei brucei (strain 927/4 GUTat10.1)).